A 141-amino-acid polypeptide reads, in one-letter code: Hemoglobin subunit alpha (141 aa).

The region spanning 1–141 (VLSPADKTNV…VSTVLTSKYR (141 aa)) is the Globin domain. Ser-3 carries the phosphoserine modification. Residue Lys-7 is modified to N6-succinyllysine. Thr-8 bears the Phosphothreonine mark. An N6-succinyllysine modification is found at Lys-11. Lys-16 is subject to N6-acetyllysine; alternate. Lys-16 carries the post-translational modification N6-succinyllysine; alternate. Position 24 is a phosphotyrosine (Tyr-24). Position 35 is a phosphoserine (Ser-35). Lys-40 bears the N6-succinyllysine mark. Ser-49 bears the Phosphoserine mark. Residue His-58 coordinates O2. His-87 provides a ligand contact to heme b. Ser-102 carries the post-translational modification Phosphoserine. At Thr-108 the chain carries Phosphothreonine. 2 positions are modified to phosphoserine: Ser-124 and Ser-131. Thr-134 and Thr-137 each carry phosphothreonine. Ser-138 bears the Phosphoserine mark.

This sequence belongs to the globin family. As to quaternary structure, heterotetramer of two alpha chains and two beta chains. In terms of tissue distribution, red blood cells.

Its function is as follows. Involved in oxygen transport from the lung to the various peripheral tissues. This chain is Hemoglobin subunit alpha, found in Otospermophilus beecheyi (California ground squirrel).